A 422-amino-acid chain; its full sequence is MNSQLLFDDLAQRGLIAQTTDLEQLIALFRQPQTLYCGFDPTAGSLHIGHLVPLIMLKRFQDAGHQGIALIGGATGMIGDPSFKASERSLNSAETVAAWVNALATQIQQLMTPHLTQPLVMVNNADWMQSIGVIAFFRDIGKHFSVNAMIQRESVKQRLARPDQGISFTEFSYSLLQSYDFAQLNQTHQCALQIGGNDQWGNIVSGIDLTRRLNGTTVHGLTLPLITKSDGTKFGKTEGGAIWLDAAKTSPYMFYQFWLNCDDADVYRFLRYYTFLSVEQIEQIEATDKAQVGKPSAQRILAEEMTRFVHGHAGLESAQRISQALFSGQLNQLNLAELKQLEQDGLPCRQLAHVSDVVTLLLETGLASSKRQAREWLENGAIRINGERWNEQTLAQTFALYDQYYIVQRGKKQFAMVKLAQV.

Residue Tyr36 participates in L-tyrosine binding. The 'HIGH' region signature appears at 41–50 (PTAGSLHIGH). Positions 173 and 177 each coordinate L-tyrosine. A 'KMSKS' region motif is present at residues 233 to 237 (KFGKT). Residue Lys236 participates in ATP binding. An S4 RNA-binding domain is found at 355-419 (SDVVTLLLET…GKKQFAMVKL (65 aa)).

Belongs to the class-I aminoacyl-tRNA synthetase family. TyrS type 1 subfamily. As to quaternary structure, homodimer.

The protein localises to the cytoplasm. It carries out the reaction tRNA(Tyr) + L-tyrosine + ATP = L-tyrosyl-tRNA(Tyr) + AMP + diphosphate + H(+). Its function is as follows. Catalyzes the attachment of tyrosine to tRNA(Tyr) in a two-step reaction: tyrosine is first activated by ATP to form Tyr-AMP and then transferred to the acceptor end of tRNA(Tyr). This Vibrio vulnificus (strain YJ016) protein is Tyrosine--tRNA ligase 1.